Reading from the N-terminus, the 587-residue chain is DELLA protein GAIP-B (587 aa).

Positions 1–23 are disordered; the sequence is MKREHHHLHPRPDPPSMAAAPNG. The DELLA motif motif lies at 46-50; sequence DELLA. Positions 209–577 constitute a GRAS domain; it reads VDSQENGIQL…RPLIVTSAWK (369 aa). The leucine repeat I (LRI) stretch occupies residues 216–270; sequence IQLVHALMACAEAVQQNNLNLAEALEKRIGYLAVSQAGAMRKVATFFAEALARRI. The interval 288–353 is VHIID; the sequence is QLHFYESSPY…SGPPAFRLTG (66 aa). The short motif at 319–323 is the VHIID element; it reads VHVID. Residues 367-399 are leucine repeat II (LRII); it reads DVGWKLAKLVETINVEFEYRGFVANSLADLDAS. Residues 411-498 are PFYRE; the sequence is VVVNSVFELH…EMYLGKQICN (88 aa). The short motif at 419–423 is the LXXLL motif element; it reads LHKLL. The segment at 501–577 is SAW; it reads ACEGSDRVEW…RPLIVTSAWK (77 aa).

It belongs to the GRAS family. DELLA subfamily. In terms of processing, phosphorylated. Ubiquitinated. Upon GA application it is ubiquitinated, leading to its subsequent degradation.

It localises to the nucleus. Probable transcriptional regulator that acts as a repressor of the gibberellin (GA) signaling pathway. Probably acts by participating in large multiprotein complexes that represses transcription of GA-inducible genes. Upon GA application, it is degraded by the proteasome, allowing the GA signaling pathway. In Cucurbita maxima (Pumpkin), this protein is DELLA protein GAIP-B (GAIPB).